The following is a 488-amino-acid chain: Adenylosuccinate synthetase 1, chloroplastic (488 aa).

A chloroplast-targeting transit peptide spans 1 to 47 (MSLSTVNHAAAAAAAAAGPGKSFSAAAPAAPSVRLPRTRAPAAAAVS). GTP-binding positions include 75–81 (GDEGKGK) and 103–105 (GHT). Asp-76 (proton acceptor) is an active-site residue. The Mg(2+) site is built by Asp-76 and Gly-103. Residues 76–79 (DEGK), 101–104 (NAGH), Thr-193, Arg-207, Gln-287, Thr-302, and Arg-366 contribute to the IMP site. Residue His-104 is the Proton donor of the active site. 362–368 (TTTGRPR) serves as a coordination point for substrate. Residues Arg-368, 394–396 (KLD), and 477–479 (GVG) contribute to the GTP site.

The protein belongs to the adenylosuccinate synthetase family. Homodimer. Mg(2+) is required as a cofactor.

The protein resides in the plastid. Its subcellular location is the chloroplast. It catalyses the reaction IMP + L-aspartate + GTP = N(6)-(1,2-dicarboxyethyl)-AMP + GDP + phosphate + 2 H(+). The protein operates within purine metabolism; AMP biosynthesis via de novo pathway; AMP from IMP: step 1/2. Functionally, plays an important role in the de novo pathway and in the salvage pathway of purine nucleotide biosynthesis. Catalyzes the first committed step in the biosynthesis of AMP from IMP. This Oryza sativa subsp. japonica (Rice) protein is Adenylosuccinate synthetase 1, chloroplastic.